The primary structure comprises 89 residues: uncharacterized protein (89 aa).

The protein to Rhizobium NGR234A y4oN.

This is an uncharacterized protein from Sinorhizobium fredii (strain NBRC 101917 / NGR234).